The following is a 502-amino-acid chain: CDP-diacylglycerol--glycerol-3-phosphate 3-phosphatidyltransferase (502 aa).

58-65 (STLYIGKE) serves as a coordination point for ATP. PLD phosphodiesterase domains are found at residues 143–169 (GWGL…SRDY) and 410–443 (KGNT…TSRS). Residues histidine 148, lysine 150, and aspartate 155 contribute to the active site.

This sequence belongs to the CDP-alcohol phosphatidyltransferase class-II family.

It is found in the mitochondrion. The catalysed reaction is a CDP-1,2-diacyl-sn-glycerol + sn-glycerol 3-phosphate = a 1,2-diacyl-sn-glycero-3-phospho-(1'-sn-glycero-3'-phosphate) + CMP + H(+). It functions in the pathway phospholipid metabolism; phosphatidylglycerol biosynthesis; phosphatidylglycerol from CDP-diacylglycerol: step 1/2. Functionally, functions in the biosynthesis of the anionic phospholipids phosphatidylglycerol and cardiolipin. The polypeptide is CDP-diacylglycerol--glycerol-3-phosphate 3-phosphatidyltransferase (pgs1) (Schizosaccharomyces pombe (strain 972 / ATCC 24843) (Fission yeast)).